A 183-amino-acid chain; its full sequence is NEDD8-conjugating enzyme Ubc12 (183 aa).

Position 1 is an N-acetylmethionine (Met1). The segment at 1–29 (MIKLFSLKQQKKEEESAGGTKGSSKKASA) is disordered. An interaction with UBA3 region spans residues 1–57 (MIKLFSLKQQKKEEESAGGTKGSSKKASAAQLRIQKDINELNLPKTCDISFSDPDDL). Lys3 carries the N6-acetyllysine modification. Residues 29–173 (AAQLRIQKDI…VQRSMRGGYI (145 aa)) enclose the UBC core domain. Ser50 is modified (phosphoserine). Cys111 acts as the Glycyl thioester intermediate in catalysis. An Asymmetric dimethylarginine; alternate modification is found at Arg169. The residue at position 169 (Arg169) is an Omega-N-methylarginine; alternate.

The protein belongs to the ubiquitin-conjugating enzyme family. UBC12 subfamily. Interacts with UBA3 and RBX1. Interacts (N-terminally acetylated form) with (via DCUN1 domain) DCUN1D1, DCUN1D2, DCUN1D3, DCUN1D4 and DCUN1D5. The acetylation of Met-1 increases affinity for DCUN1D1 by about 2 orders of magnitude and is crucial for NEDD8 transfer to cullins.

The catalysed reaction is [E1 NEDD8-activating enzyme]-S-[NEDD8 protein]-yl-L-cysteine + [E2 NEDD8-conjugating enzyme]-L-cysteine = [E1 NEDD8-activating enzyme]-L-cysteine + [E2 NEDD8-conjugating enzyme]-S-[NEDD8-protein]-yl-L-cysteine.. It participates in protein modification; protein neddylation. In terms of biological role, accepts the ubiquitin-like protein NEDD8 from the UBA3-NAE1 E1 complex and catalyzes its covalent attachment to other proteins. The specific interaction with the E3 ubiquitin ligase RBX1, but not RBX2, suggests that the RBX1-UBE2M complex neddylates specific target proteins, such as CUL1, CUL2, CUL3 and CUL4. Involved in cell proliferation. The protein is NEDD8-conjugating enzyme Ubc12 (Ube2m) of Mus musculus (Mouse).